Here is a 362-residue protein sequence, read N- to C-terminus: Phosphoserine aminotransferase (362 aa).

Arginine 42 serves as a coordination point for L-glutamate. Pyridoxal 5'-phosphate-binding residues include tryptophan 102, threonine 154, aspartate 174, and glutamine 197. Position 198 is an N6-(pyridoxal phosphate)lysine (lysine 198). 239 to 240 is a binding site for pyridoxal 5'-phosphate; that stretch reads NT.

Belongs to the class-V pyridoxal-phosphate-dependent aminotransferase family. SerC subfamily. Homodimer. It depends on pyridoxal 5'-phosphate as a cofactor.

The protein resides in the cytoplasm. The enzyme catalyses O-phospho-L-serine + 2-oxoglutarate = 3-phosphooxypyruvate + L-glutamate. The catalysed reaction is 4-(phosphooxy)-L-threonine + 2-oxoglutarate = (R)-3-hydroxy-2-oxo-4-phosphooxybutanoate + L-glutamate. It functions in the pathway amino-acid biosynthesis; L-serine biosynthesis; L-serine from 3-phospho-D-glycerate: step 2/3. Its pathway is cofactor biosynthesis; pyridoxine 5'-phosphate biosynthesis; pyridoxine 5'-phosphate from D-erythrose 4-phosphate: step 3/5. Its function is as follows. Catalyzes the reversible conversion of 3-phosphohydroxypyruvate to phosphoserine and of 3-hydroxy-2-oxo-4-phosphonooxybutanoate to phosphohydroxythreonine. The sequence is that of Phosphoserine aminotransferase from Haemophilus ducreyi (strain 35000HP / ATCC 700724).